Consider the following 179-residue polypeptide: Acireductone dioxygenase (179 aa).

The tract at residues 1–23 (MVQAWYMDESTADPRMPHRAQPD) is disordered. 4 residues coordinate Fe(2+): His-88, His-90, Glu-94, and His-133. 4 residues coordinate Ni(2+): His-88, His-90, Glu-94, and His-133.

Belongs to the acireductone dioxygenase (ARD) family. In terms of assembly, monomer. Interacts with MMP14. Fe(2+) is required as a cofactor. It depends on Ni(2+) as a cofactor. In terms of tissue distribution, detected in prostate, liver, heart, brain, muscle, kidney and seminal vesicles.

It is found in the cytoplasm. It localises to the nucleus. The protein localises to the cell membrane. It carries out the reaction 1,2-dihydroxy-5-(methylsulfanyl)pent-1-en-3-one + O2 = 4-methylsulfanyl-2-oxobutanoate + formate + 2 H(+). The enzyme catalyses 1,2-dihydroxy-5-(methylsulfanyl)pent-1-en-3-one + O2 = 3-(methylsulfanyl)propanoate + CO + formate + 2 H(+). It functions in the pathway amino-acid biosynthesis; L-methionine biosynthesis via salvage pathway; L-methionine from S-methyl-5-thio-alpha-D-ribose 1-phosphate: step 5/6. Functionally, catalyzes 2 different reactions between oxygen and the acireductone 1,2-dihydroxy-3-keto-5-methylthiopentene (DHK-MTPene) depending upon the metal bound in the active site. Fe-containing acireductone dioxygenase (Fe-ARD) produces formate and 2-keto-4-methylthiobutyrate (KMTB), the alpha-ketoacid precursor of methionine in the methionine recycle pathway. Ni-containing acireductone dioxygenase (Ni-ARD) produces methylthiopropionate, carbon monoxide and formate, and does not lie on the methionine recycle pathway. Also down-regulates cell migration mediated by MMP14. In Rattus norvegicus (Rat), this protein is Acireductone dioxygenase (Adi1).